We begin with the raw amino-acid sequence, 575 residues long: Chaperonin CPN60-2, mitochondrial (575 aa).

A mitochondrion-targeting transit peptide spans 1-32 (MHRFASGLASKARLARKGANQIASRSSWSRNY).

It belongs to the chaperonin (HSP60) family.

It localises to the mitochondrion. Its function is as follows. Implicated in mitochondrial protein import and macromolecular assembly. May facilitate the correct folding of imported proteins. May also prevent misfolding and promote the refolding and proper assembly of unfolded polypeptides generated under stress conditions in the mitochondrial matrix. The polypeptide is Chaperonin CPN60-2, mitochondrial (CPN60-2) (Cucurbita maxima (Pumpkin)).